The chain runs to 364 residues: Aminomethyltransferase (364 aa).

The protein belongs to the GcvT family. As to quaternary structure, the glycine cleavage system is composed of four proteins: P, T, L and H.

The catalysed reaction is N(6)-[(R)-S(8)-aminomethyldihydrolipoyl]-L-lysyl-[protein] + (6S)-5,6,7,8-tetrahydrofolate = N(6)-[(R)-dihydrolipoyl]-L-lysyl-[protein] + (6R)-5,10-methylene-5,6,7,8-tetrahydrofolate + NH4(+). In terms of biological role, the glycine cleavage system catalyzes the degradation of glycine. This Escherichia coli O157:H7 protein is Aminomethyltransferase.